A 255-amino-acid polypeptide reads, in one-letter code: Putative F-box protein L126 (255 aa).

Residues 1–46 enclose the F-box domain; that stretch reads MLPEEILFMVFSFLDVKELIACSHACSHACSQWRRICSDKLLWVQK.

In Acanthamoeba polyphaga (Amoeba), this protein is Putative F-box protein L126.